The sequence spans 275 residues: MPELPEVEVTRRGIEPFVAGRRVERVDVRTEMLRWPVPAGLAEQLRAREVLAVERRGKYLLFEVDAGWFIVHLGMTGTLRVLPADGLPVAAKHDHIDWIFDEFVLRFRDPRRFGAVLWHPREAGDVHAHPLLASLGVEPFSPAFTGALLHARTRGRTVSVKQALLAGDMVVGVGNIYASESLFRAGIRPTTAAGKVSLPRYERLADAVRATLADAIERGGSTLRDFVGSNGESGYFQLDCFVYDRAGQPCRVCNTPIRQIVQGQRSTYFCPTCQR.

The active-site Schiff-base intermediate with DNA is the Pro2. The active-site Proton donor is Glu3. Lys58 (proton donor; for beta-elimination activity) is an active-site residue. His93, Arg111, and Arg156 together coordinate DNA. Residues 241–275 (FVYDRAGQPCRVCNTPIRQIVQGQRSTYFCPTCQR) form an FPG-type zinc finger. The active-site Proton donor; for delta-elimination activity is the Arg265.

Belongs to the FPG family. Monomer. Requires Zn(2+) as cofactor.

It catalyses the reaction Hydrolysis of DNA containing ring-opened 7-methylguanine residues, releasing 2,6-diamino-4-hydroxy-5-(N-methyl)formamidopyrimidine.. The catalysed reaction is 2'-deoxyribonucleotide-(2'-deoxyribose 5'-phosphate)-2'-deoxyribonucleotide-DNA = a 3'-end 2'-deoxyribonucleotide-(2,3-dehydro-2,3-deoxyribose 5'-phosphate)-DNA + a 5'-end 5'-phospho-2'-deoxyribonucleoside-DNA + H(+). Its function is as follows. Involved in base excision repair of DNA damaged by oxidation or by mutagenic agents. Acts as a DNA glycosylase that recognizes and removes damaged bases. Has a preference for oxidized purines, such as 7,8-dihydro-8-oxoguanine (8-oxoG). Has AP (apurinic/apyrimidinic) lyase activity and introduces nicks in the DNA strand. Cleaves the DNA backbone by beta-delta elimination to generate a single-strand break at the site of the removed base with both 3'- and 5'-phosphates. The polypeptide is Formamidopyrimidine-DNA glycosylase (Burkholderia lata (strain ATCC 17760 / DSM 23089 / LMG 22485 / NCIMB 9086 / R18194 / 383)).